A 530-amino-acid chain; its full sequence is Light-harvesting complex I LH38 proteins (530 aa).

The protein localises to the plastid. It localises to the chloroplast. The polypeptide is Light-harvesting complex I LH38 proteins (Euglena gracilis).